Here is a 1588-residue protein sequence, read N- to C-terminus: Pentafunctional AROM polypeptide (1588 aa).

The tract at residues 1–392 (MVQLAKVPIL…YGDSAQFVSD (392 aa)) is 3-dehydroquinate synthase. NAD(+)-binding positions include 43 to 45 (DTN), 78 to 81 (ETSK), 109 to 111 (GGV), and D114. R125 provides a ligand contact to 7-phospho-2-dehydro-3-deoxy-D-arabino-heptonate. 134–135 (TS) contacts NAD(+). 7-phospho-2-dehydro-3-deoxy-D-arabino-heptonate contacts are provided by D141 and K147. Residue K156 coordinates NAD(+). Residue N157 coordinates 7-phospho-2-dehydro-3-deoxy-D-arabino-heptonate. NAD(+)-binding positions include 174–177 (WLET) and N185. Residue E189 coordinates Zn(2+). 7-phospho-2-dehydro-3-deoxy-D-arabino-heptonate contacts are provided by residues 189-192 (EVIK) and K258. The active-site Proton acceptor; for 3-dehydroquinate synthase activity is the E268. Residues 272 to 276 (RNLLN) and H279 contribute to the 7-phospho-2-dehydro-3-deoxy-D-arabino-heptonate site. Residue H279 coordinates Zn(2+). H283 (proton acceptor; for 3-dehydroquinate synthase activity) is an active-site residue. 7-phospho-2-dehydro-3-deoxy-D-arabino-heptonate is bound by residues H295 and K364. H295 contacts Zn(2+). The segment at 405-871 (VYPFKDIPAD…WDVLHSELGA (467 aa)) is EPSP synthase. C853 serves as the catalytic For EPSP synthase activity. The segment at 890–1080 (SVVIIGMRAA…IPSGRSAFVC (191 aa)) is shikimate kinase. 895-902 (GMRAAGKT) serves as a coordination point for ATP. The segment at 1081-1293 (LTFDDLTEQT…AAPGQLTVAQ (213 aa)) is 3-dehydroquinase. H1198 (proton acceptor; for 3-dehydroquinate dehydratase activity) is an active-site residue. Catalysis depends on K1227, which acts as the Schiff-base intermediate with substrate; for 3-dehydroquinate dehydratase activity. A shikimate dehydrogenase region spans residues 1306–1588 (PKELFVVGKP…KAIFDAVTKE (283 aa)).

This sequence in the N-terminal section; belongs to the sugar phosphate cyclases superfamily. Dehydroquinate synthase family. The protein in the 2nd section; belongs to the EPSP synthase family. In the 3rd section; belongs to the shikimate kinase family. It in the 4th section; belongs to the type-I 3-dehydroquinase family. This sequence in the C-terminal section; belongs to the shikimate dehydrogenase family. Homodimer. It depends on Zn(2+) as a cofactor.

The protein resides in the cytoplasm. The catalysed reaction is 7-phospho-2-dehydro-3-deoxy-D-arabino-heptonate = 3-dehydroquinate + phosphate. It catalyses the reaction 3-dehydroquinate = 3-dehydroshikimate + H2O. It carries out the reaction shikimate + NADP(+) = 3-dehydroshikimate + NADPH + H(+). The enzyme catalyses shikimate + ATP = 3-phosphoshikimate + ADP + H(+). The catalysed reaction is 3-phosphoshikimate + phosphoenolpyruvate = 5-O-(1-carboxyvinyl)-3-phosphoshikimate + phosphate. It functions in the pathway metabolic intermediate biosynthesis; chorismate biosynthesis; chorismate from D-erythrose 4-phosphate and phosphoenolpyruvate: step 2/7. The protein operates within metabolic intermediate biosynthesis; chorismate biosynthesis; chorismate from D-erythrose 4-phosphate and phosphoenolpyruvate: step 3/7. Its pathway is metabolic intermediate biosynthesis; chorismate biosynthesis; chorismate from D-erythrose 4-phosphate and phosphoenolpyruvate: step 4/7. It participates in metabolic intermediate biosynthesis; chorismate biosynthesis; chorismate from D-erythrose 4-phosphate and phosphoenolpyruvate: step 5/7. It functions in the pathway metabolic intermediate biosynthesis; chorismate biosynthesis; chorismate from D-erythrose 4-phosphate and phosphoenolpyruvate: step 6/7. The AROM polypeptide catalyzes 5 consecutive enzymatic reactions in prechorismate polyaromatic amino acid biosynthesis. This is Pentafunctional AROM polypeptide from Saccharomyces cerevisiae (strain JAY291) (Baker's yeast).